Reading from the N-terminus, the 1411-residue chain is Early endosome antigen 1 (1411 aa).

The disordered stretch occupies residues 1–27 (MLRRILQRTPGRVGSQGSDLDSSATPI). A compositionally biased stretch (polar residues) spans 15–27 (SQGSDLDSSATPI). A C2H2-type zinc finger spans residues 41-64 (FICPQCMKSLGSADELFKHYEAVH). Serine 52 and serine 70 each carry phosphoserine. Positions 74–1348 (GESNLALKRD…IKHTQALNRK (1275 aa)) form a coiled coil. The tract at residues 473–501 (VTNSTELQHQLDKTKQQHQEQQALQQSTT) is disordered. Basic and acidic residues predominate over residues 481–490 (HQLDKTKQQH). The segment at 1352 to 1410 (DNEVQNCMACGKGFSVTVRRHHCRQCGNIFCAECSAKNALTPSSKKPVRVCDACFNDLQ) adopts an FYVE-type zinc-finger fold. Positions 1358, 1361, 1374, 1377, 1382, 1385, 1402, and 1405 each coordinate Zn(2+).

As to quaternary structure, homodimer. Binds STX6. Binds RAB5A, RAB5B, RAB5C and RAB22A that have been activated by GTP-binding. Interacts with RAB31. Interacts with ERBB2. Interacts with SAMD9 and SAMD9L. May interact with PLEKHF2.

Its subcellular location is the cytoplasm. It localises to the early endosome membrane. Its function is as follows. Binds phospholipid vesicles containing phosphatidylinositol 3-phosphate and participates in endosomal trafficking. The chain is Early endosome antigen 1 (EEA1) from Homo sapiens (Human).